We begin with the raw amino-acid sequence, 98 residues long: NADH-ubiquinone oxidoreductase chain 4L (98 aa).

Transmembrane regions (helical) follow at residues 1–21 (MTPIQFTFSSAFLLGLSGLAF), 26–46 (LLSALLCLEGMMLSLFIALSL), and 59–79 (APMLLLAFSACEASVGLALMV).

This sequence belongs to the complex I subunit 4L family.

Its subcellular location is the mitochondrion membrane. It carries out the reaction a ubiquinone + NADH + 5 H(+)(in) = a ubiquinol + NAD(+) + 4 H(+)(out). In terms of biological role, core subunit of the mitochondrial membrane respiratory chain NADH dehydrogenase (Complex I) which catalyzes electron transfer from NADH through the respiratory chain, using ubiquinone as an electron acceptor. Part of the enzyme membrane arm which is embedded in the lipid bilayer and involved in proton translocation. This chain is NADH-ubiquinone oxidoreductase chain 4L (MT-ND4L), found in Tetraodon nigroviridis (Spotted green pufferfish).